Reading from the N-terminus, the 428-residue chain is Histidine--tRNA ligase (428 aa).

Belongs to the class-II aminoacyl-tRNA synthetase family. Homodimer.

It is found in the cytoplasm. It carries out the reaction tRNA(His) + L-histidine + ATP = L-histidyl-tRNA(His) + AMP + diphosphate + H(+). The chain is Histidine--tRNA ligase from Bordetella bronchiseptica (strain ATCC BAA-588 / NCTC 13252 / RB50) (Alcaligenes bronchisepticus).